Consider the following 217-residue polypeptide: N-(5'-phosphoribosyl)anthranilate isomerase (217 aa).

It belongs to the TrpF family.

The catalysed reaction is N-(5-phospho-beta-D-ribosyl)anthranilate = 1-(2-carboxyphenylamino)-1-deoxy-D-ribulose 5-phosphate. Its pathway is amino-acid biosynthesis; L-tryptophan biosynthesis; L-tryptophan from chorismate: step 3/5. The polypeptide is N-(5'-phosphoribosyl)anthranilate isomerase (Chlorobium phaeovibrioides (strain DSM 265 / 1930) (Prosthecochloris vibrioformis (strain DSM 265))).